The chain runs to 928 residues: G-protein coupled receptor family C group 6 member A (928 aa).

An N-terminal signal peptide occupies residues 1-20; sequence MALLITVVTCFMIILDTSQS. The Extracellular segment spans residues 21-594; the sequence is CHTPDDFVAI…EYLDWDDSLA (574 aa). N-linked (GlcNAc...) asparagine glycosylation is found at Asn-332, Asn-555, and Asn-567. The chain crosses the membrane as a helical span at residues 595-615; the sequence is LLLIALSLLGIAFVLAIGIIF. The Cytoplasmic segment spans residues 616 to 630; the sequence is TRNLKTPVVKSSGGL. A helical transmembrane segment spans residues 631-651; sequence VVCYVMLICHALNFASTGFFI. Topologically, residues 652–669 are extracellular; the sequence is GEPQDFACKTRQTLFGVS. The helical transmembrane segment at 670 to 690 threads the bilayer; it reads FTLCVSCILTKSLKILLAFSF. The Cytoplasmic portion of the chain corresponds to 691–706; the sequence is DPKLTMFLKCLYRPVP. A helical membrane pass occupies residues 707–727; that stretch reads IVLTCTGIQVVICTLWLVLAA. Over 728–750 the chain is Extracellular; that stretch reads PSVEENISLPRVIILECEEGSAL. Residues 751-771 form a helical membrane-spanning segment; it reads AFGTMLGYITVLAFICFVFAF. Topologically, residues 772–784 are cytoplasmic; sequence KGRKLPENYNEAK. The helical transmembrane segment at 785–805 threads the bilayer; that stretch reads FLTFGMLIYFIAWITFIPVYT. Residues 806–812 are Extracellular-facing; it reads TTFGKYL. Residues 813 to 833 traverse the membrane as a helical segment; sequence PAVEIIVILISNYGILCCIFF. The Cytoplasmic segment spans residues 834 to 928; it reads PKCYIILCKQ…TLRQKRSSSI (95 aa).

It belongs to the G-protein coupled receptor 3 family. Homodimer; disulfide-linked. Post-translationally, N-glycosylated. As to expression, expressed at high level in liver, lung, spleen and heart. Expressed at lower level in kidney, skeletal muscle and brain. Expressed in 7 dpc, 11 dpc, 15 dpc and 17 dpc embryos.

It localises to the cell membrane. Receptor activated by multiple ligands, including osteocalcin (BGLAP), basic amino acids, and various cations. Activated by amino acids with a preference for basic amino acids such as L-Lys, L-Arg and L-ornithine but also by small and polar amino acids. The L-alpha amino acids respond is augmented by divalent cations Ca(2+) and Mg(2+). Seems to act through a G(q)/G(11) and G(i)-coupled pathway. Regulates testosterone production by acting as a ligand for uncarboxylated osteocalcin hormone: osteocalcin-binding at the surface of Leydig cells initiates a signaling response that promotes the expression of enzymes required for testosterone synthesis in a CREB-dependent manner. Mediates the non-genomic effects of androgens in multiple tissue. May coordinate nutritional and hormonal anabolic signals through the sensing of extracellular amino acids, osteocalcin, divalent ions and its responsiveness to anabolic steroids. The polypeptide is G-protein coupled receptor family C group 6 member A (Gprc6a) (Mus musculus (Mouse)).